We begin with the raw amino-acid sequence, 606 residues long: MRGSWYKSVSSVFGLRPRIRGLLFFIVGVVALVTILAPLTSNSYDSSSSSTLVPNIYSNYRRIKEQAAVDYLDLRSLSLGASLKEFPFCGKERESYVPCYNITGNLLAGLQEGEELDRHCEFEREKERCVVRPPRDYKIPLRWPLGRDIIWSGNVKITKDQFLSSGTVTTRLMLLEENQITFHSEDGLVFDGVKDYARQIAEMIGLGSDTEFAQAGVRTVLDIGCGFGSFGAHLVSLKLMPICIAEYEATGSQVQLALERGLPAMIGNFFSKQLPYPALSFDMVHCAQCGTTWDIKDAMLLLEVDRVLKPGGYFVLTSPTNKAQGNLPDTKKTSISTRVNELSKKICWSLTAQQDETFLWQKTSDSSCYSSRSQASIPLCKDGDSVPYYHPLVPCISGTTSKRWISIQNRSAVAGTTSAGLEIHGKSALKNYWSLLTPLIFSDHPKRPGDEDPLPPFNMIRNVMDMHARFGNLNAALLDEGKSAWVMNVVPVNARNTLPIILDRGFAGVLHDWCEPFPTYPRTYDMLHANELLTHLSSERCSLMDLFLEMDRILRPEGWVVLSDKVGVIEMARALAARVRWEARVIDLQDGSDQRLLVCQKPFIKK.

The Cytoplasmic segment spans residues 1-20 (MRGSWYKSVSSVFGLRPRIR). A helical; Signal-anchor for type II membrane protein membrane pass occupies residues 21–41 (GLLFFIVGVVALVTILAPLTS). The Lumenal portion of the chain corresponds to 42–606 (NSYDSSSSST…LVCQKPFIKK (565 aa)). 2 N-linked (GlcNAc...) asparagine glycosylation sites follow: Asn101 and Asn409.

Belongs to the methyltransferase superfamily.

Its subcellular location is the endoplasmic reticulum membrane. This is Probable methyltransferase PMT5 from Arabidopsis thaliana (Mouse-ear cress).